A 102-amino-acid polypeptide reads, in one-letter code: Small ribosomal subunit protein uS10 (102 aa).

It belongs to the universal ribosomal protein uS10 family. In terms of assembly, part of the 30S ribosomal subunit.

Functionally, involved in the binding of tRNA to the ribosomes. This is Small ribosomal subunit protein uS10 from Streptococcus sanguinis (strain SK36).